Reading from the N-terminus, the 121-residue chain is Probable intron-encoded DNA endonuclease aI1 (121 aa).

This sequence belongs to the LAGLIDADG endonuclease family.

The protein localises to the mitochondrion. Functionally, mitochondrial DNA endonuclease involved in intron homing. This is Probable intron-encoded DNA endonuclease aI1 (aI1) from Mycosarcoma maydis (Corn smut fungus).